Reading from the N-terminus, the 504-residue chain is Cobyric acid synthase (504 aa).

The region spanning 254–442 is the GATase cobBQ-type domain; that stretch reads AIDVAVIRYP…MHDLFHNDMF (189 aa). The active-site Nucleophile is the Cys-336. Residue His-434 is part of the active site.

It belongs to the CobB/CobQ family. CobQ subfamily.

It participates in cofactor biosynthesis; adenosylcobalamin biosynthesis. Functionally, catalyzes amidations at positions B, D, E, and G on adenosylcobyrinic A,C-diamide. NH(2) groups are provided by glutamine, and one molecule of ATP is hydrogenolyzed for each amidation. In Anoxybacillus flavithermus (strain DSM 21510 / WK1), this protein is Cobyric acid synthase.